We begin with the raw amino-acid sequence, 728 residues long: Phosphoribosylformylglycinamidine synthase subunit PurL (728 aa).

Histidine 42 is an active-site residue. 2 residues coordinate ATP: tyrosine 45 and lysine 84. Glutamate 86 contributes to the Mg(2+) binding site. Substrate-binding positions include serine 87–histidine 90 and arginine 109. Residue histidine 88 is the Proton acceptor of the active site. Aspartate 110 lines the Mg(2+) pocket. Glutamine 237 contributes to the substrate binding site. Aspartate 265 lines the Mg(2+) pocket. Glutamate 309–glutamine 311 lines the substrate pocket. Positions 491 and 528 each coordinate ATP. Asparagine 529 contacts Mg(2+). Residue serine 531 participates in substrate binding.

Belongs to the FGAMS family. In terms of assembly, monomer. Part of the FGAM synthase complex composed of 1 PurL, 1 PurQ and 2 PurS subunits.

It is found in the cytoplasm. It carries out the reaction N(2)-formyl-N(1)-(5-phospho-beta-D-ribosyl)glycinamide + L-glutamine + ATP + H2O = 2-formamido-N(1)-(5-O-phospho-beta-D-ribosyl)acetamidine + L-glutamate + ADP + phosphate + H(+). It participates in purine metabolism; IMP biosynthesis via de novo pathway; 5-amino-1-(5-phospho-D-ribosyl)imidazole from N(2)-formyl-N(1)-(5-phospho-D-ribosyl)glycinamide: step 1/2. Functionally, part of the phosphoribosylformylglycinamidine synthase complex involved in the purines biosynthetic pathway. Catalyzes the ATP-dependent conversion of formylglycinamide ribonucleotide (FGAR) and glutamine to yield formylglycinamidine ribonucleotide (FGAM) and glutamate. The FGAM synthase complex is composed of three subunits. PurQ produces an ammonia molecule by converting glutamine to glutamate. PurL transfers the ammonia molecule to FGAR to form FGAM in an ATP-dependent manner. PurS interacts with PurQ and PurL and is thought to assist in the transfer of the ammonia molecule from PurQ to PurL. This chain is Phosphoribosylformylglycinamidine synthase subunit PurL, found in Campylobacter jejuni subsp. jejuni serotype O:23/36 (strain 81-176).